We begin with the raw amino-acid sequence, 280 residues long: MKFRAKIVDGACLNHFTRISNMIAKLAKTCTLRISPDKLNFILCDKLANGGVSMWCELEQENFFNEFQMEGVSAENNEIYLELTSENLSRALKTAQNARALKIKLTNKHFPCLTVSVELLSMSSSSRIVTHDIPIKVIPRKLWKDLQEPVVPDPDVSIYLPVLKTMKSVVEKMKNISNHLVIEANLDGELNLKIETELVCVTTHFKDLGNPPLASESTHEDRNVEHMAEVHIDIRKLLQFLAGQQVNPTKALCNIVNNKMVHFDLLHEDVSLQYFIPALS.

The protein belongs to the HUS1 family. As to quaternary structure, component of the toroidal 9-1-1 (RAD9-RAD1-HUS1) complex, composed of RAD9A, RAD1 and HUS1. The 9-1-1 complex associates with LIG1, POLB, FEN1, RAD17, HDAC1, RPA1 and RPA2. The 9-1-1 complex associates with the RAD17-RFC complex. HUS1 interacts with POLB, HDAC1, FEN1, PCNA and RAD9B. HUS1 does not interact with RAD17. Interacts with DNAJC7. As to expression, ubiquitous.

Its subcellular location is the nucleus. The protein localises to the cytoplasm. The protein resides in the cytosol. Its function is as follows. Component of the 9-1-1 cell-cycle checkpoint response complex that plays a major role in DNA repair. The 9-1-1 complex is recruited to DNA lesion upon damage by the RAD17-replication factor C (RFC) clamp loader complex. Acts then as a sliding clamp platform on DNA for several proteins involved in long-patch base excision repair (LP-BER). The 9-1-1 complex stimulates DNA polymerase beta (POLB) activity by increasing its affinity for the 3'-OH end of the primer-template and stabilizes POLB to those sites where LP-BER proceeds; endonuclease FEN1 cleavage activity on substrates with double, nick, or gap flaps of distinct sequences and lengths; and DNA ligase I (LIG1) on long-patch base excision repair substrates. The 9-1-1 complex is necessary for the recruitment of RHNO1 to sites of double-stranded breaks (DSB) occurring during the S phase. The protein is Checkpoint protein HUS1 (HUS1) of Homo sapiens (Human).